We begin with the raw amino-acid sequence, 427 residues long: Enolase (427 aa).

Residue glutamine 163 participates in (2R)-2-phosphoglycerate binding. Catalysis depends on glutamate 205, which acts as the Proton donor. Aspartate 242, glutamate 288, and aspartate 315 together coordinate Mg(2+). Residues lysine 340, arginine 369, serine 370, and lysine 391 each coordinate (2R)-2-phosphoglycerate. Lysine 340 serves as the catalytic Proton acceptor.

It belongs to the enolase family. Requires Mg(2+) as cofactor.

The protein localises to the cytoplasm. It is found in the secreted. It localises to the cell surface. It catalyses the reaction (2R)-2-phosphoglycerate = phosphoenolpyruvate + H2O. Its pathway is carbohydrate degradation; glycolysis; pyruvate from D-glyceraldehyde 3-phosphate: step 4/5. Catalyzes the reversible conversion of 2-phosphoglycerate (2-PG) into phosphoenolpyruvate (PEP). It is essential for the degradation of carbohydrates via glycolysis. The sequence is that of Enolase from Cytophaga hutchinsonii (strain ATCC 33406 / DSM 1761 / CIP 103989 / NBRC 15051 / NCIMB 9469 / D465).